The primary structure comprises 705 residues: CAP-Gly domain-containing linker protein 4 (705 aa).

ANK repeat units follow at residues 65 to 101, 149 to 180, and 186 to 215; these read TSVS…NVND, TNMN…DVDA, and NFGT…NPAF. A CAP-Gly 1 domain is found at 303 to 345; sequence GTTEFASGQWAGIELDEPEGKNNGSVGKVQYFKCAPKYGIFAP. 2 disordered regions span residues 391-410 and 431-479; these read MTSK…PGEE and TSSL…ANNS. Residues 441–452 show a composition bias toward polar residues; the sequence is PKKQNAISSNKK. The segment covering 455-479 has biased composition (low complexity); the sequence is SKSPSLSSRASAGLNSSATSTANNS. The region spanning 505–547 is the CAP-Gly 2 domain; that stretch reads GTTNFAPGYWYGIELEKPHGKNDGSVGGVQYFSCSPRYGIFAP. Phosphoserine is present on residues S557 and S609. A CAP-Gly 3 domain is found at 644 to 686; sequence GPTDFASGIWLGLELRSAKGKNDGSVGDKRYFTCKPNHGVLVR.

The polypeptide is CAP-Gly domain-containing linker protein 4 (CLIP4) (Homo sapiens (Human)).